The chain runs to 590 residues: Probable serine/threonine-protein phosphatase PP2A regulatory subunit (590 aa).

HEAT repeat units lie at residues 37 to 73 (LSTIALALGVERTRNELIQFLTDTIYDEDEVLLVLAE), 74 to 111 (QLGNFTPLVGGPDHVHCLLLPLENLATVEETVVRDKAV), 113 to 150 (SLRKIADKHSSASLEEHFVPMLRRLATGDWFTSRTSAC), 151 to 188 (GLFSVVYPRVSPAIKSELKSMFRTLCRDDTPMVRRAAA), 189 to 227 (AKLGEFAKVFEKTAVIEGLHSSLTDLHVDEQDSVRLLTV), 228 to 266 (ESAIAFGTLLDKANKKKLIEPILIELFDDKSWRVRYMVA), 267 to 305 (EKLIEIQNVLGEDMDTTHLVNMYTNLLKDPEGEVRCAAT), 306 to 344 (QRLQEFALNLPEDKRQNIICNSLLNVAKELVTDGNQLVK), 349 to 387 (GVIMGLAPLIGKEQTVSELLPIYMQLLNDQTPEVRLNII), 388 to 426 (SSLDKVNEVIGAAQLSTSLLPAIVGLAEDGKWRVRLAIV), 427 to 465 (QFMPLLASQLGQEFFDEKLLPLCLNWLTDHVFSIREAST), 466 to 504 (LIMKELTQKFGGQWASTNIVPKMQKLQKDTNYLQRMTCL), 505 to 543 (FCLNTLSEAMTQEQILKEIMPIVKDLVEDDVPNVRFNAA), and 544 to 582 (KSLKRIGKNLTPSTLTSEVKPLLEKLGKDSDFDVRYFSE).

This sequence belongs to the phosphatase 2A regulatory subunit A family. Part of a complex consisting of a common heterodimeric core enzyme, composed of catalytic subunit let-92 and constant regulatory subunit paa-1, that associates with a variety of regulatory subunits which confer distinct properties to the holoenzyme. Interacts with rsa-1.

The protein resides in the cytoplasm. The protein localises to the cytoskeleton. It is found in the microtubule organizing center. Its subcellular location is the centrosome. It localises to the spindle. Functionally, acts as a scaffolding protein for phosphatase let-92 and its regulatory subunits. Probably together with let-92 and regulatory subunit sur-6, regulates centriole duplication, microtubule outgrowth and mitotic spindle stability during early embryonic cell division by preventing the degradation of sas-5 and kinase zyg-1. During vulva development, may play a role with phosphatase let-92 and regulatory subunit sur-6 in the induction of vulva cell precursors by positively regulating let-60/Ras-MAP kinase signaling, probably by promoting lin-45 activation. Plays a positive role in axon guidance probably by inhibiting phosphatase let-92. The chain is Probable serine/threonine-protein phosphatase PP2A regulatory subunit (paa-1) from Caenorhabditis elegans.